Here is a 333-residue protein sequence, read N- to C-terminus: Phosphate acyltransferase (333 aa).

The protein belongs to the PlsX family. As to quaternary structure, homodimer. Probably interacts with PlsY.

It is found in the cytoplasm. It catalyses the reaction a fatty acyl-[ACP] + phosphate = an acyl phosphate + holo-[ACP]. It participates in lipid metabolism; phospholipid metabolism. Its function is as follows. Catalyzes the reversible formation of acyl-phosphate (acyl-PO(4)) from acyl-[acyl-carrier-protein] (acyl-ACP). This enzyme utilizes acyl-ACP as fatty acyl donor, but not acyl-CoA. The protein is Phosphate acyltransferase of Cellvibrio japonicus (strain Ueda107) (Pseudomonas fluorescens subsp. cellulosa).